The primary structure comprises 169 residues: Large ribosomal subunit protein uL10 (169 aa).

Belongs to the universal ribosomal protein uL10 family. In terms of assembly, part of the ribosomal stalk of the 50S ribosomal subunit. The N-terminus interacts with L11 and the large rRNA to form the base of the stalk. The C-terminus forms an elongated spine to which L12 dimers bind in a sequential fashion forming a multimeric L10(L12)X complex.

Forms part of the ribosomal stalk, playing a central role in the interaction of the ribosome with GTP-bound translation factors. The chain is Large ribosomal subunit protein uL10 from Staphylococcus saprophyticus subsp. saprophyticus (strain ATCC 15305 / DSM 20229 / NCIMB 8711 / NCTC 7292 / S-41).